The sequence spans 362 residues: Protein RecA (362 aa).

77–84 is an ATP binding site; the sequence is GPESSGKT.

The protein belongs to the RecA family.

Its subcellular location is the cytoplasm. In terms of biological role, can catalyze the hydrolysis of ATP in the presence of single-stranded DNA, the ATP-dependent uptake of single-stranded DNA by duplex DNA, and the ATP-dependent hybridization of homologous single-stranded DNAs. It interacts with LexA causing its activation and leading to its autocatalytic cleavage. The chain is Protein RecA from Allorhizobium ampelinum (strain ATCC BAA-846 / DSM 112012 / S4) (Agrobacterium vitis (strain S4)).